Here is a 132-residue protein sequence, read N- to C-terminus: MSSRREIRWGIARVYASQNNTLITITDITGAEIISRASGGMVVKADREKPSPYAAMLAANKAATEAFDKGISAIHIKVRAQGGYGSKTPGPGAQPAIRALARAGFIIGRIEDVTPIPHDSIRRPGGRRGRRV.

This sequence belongs to the universal ribosomal protein uS11 family. As to quaternary structure, part of the 30S ribosomal subunit.

Located on the platform of the 30S subunit. This Sulfurisphaera tokodaii (strain DSM 16993 / JCM 10545 / NBRC 100140 / 7) (Sulfolobus tokodaii) protein is Small ribosomal subunit protein uS11.